We begin with the raw amino-acid sequence, 268 residues long: DNA repair protein RecO (268 aa).

It belongs to the RecO family.

Involved in DNA repair and RecF pathway recombination. The chain is DNA repair protein RecO from Parasynechococcus marenigrum (strain WH8102).